A 1334-amino-acid polypeptide reads, in one-letter code: WASH complex subunit 2 (1334 aa).

A sufficient for interaction with WASHC3, WASHC4 and WASHC5; required for interaction with WASHC1 region spans residues 1–219; that stretch reads MNRTSPDSER…VGSDRGSIVD (219 aa). A phosphoserine mark is found at Ser157, Ser159, Ser204, Ser205, and Ser209. The segment covering 201-213 has biased composition (low complexity); the sequence is GELSSEEGSVGSD. The interval 201 to 471 is disordered; that stretch reads GELSSEEGSV…SKPSKTDKVK (271 aa). Composition is skewed to acidic residues over residues 219-232 and 249-274; these read DSED…SDED and SDEE…EDIE. Phosphoserine is present on Ser284. The segment covering 289–324 has biased composition (basic and acidic residues); the sequence is LAARIKGDISNQRKEGQTDGKPQKTVKEKKERRTPA. Thr322 bears the Phosphothreonine mark. Positions 347–594 are sufficient for interaction with CCDC93; that stretch reads SRGGLFSNGQ…QTSSLQPQSQ (248 aa). The segment at 348-1334 is interaction with VPS35; it reads RGGLFSNGQG…DDPLNAFGSQ (987 aa). The short motif at 358 to 368 is the LFa 1 element; sequence LFDDEDESDLF. Phosphoserine is present on Ser388. 2 short sequence motifs (LFa) span residues 441-457 and 476-485; these read LFDD…NNFF and IFDDDEGDLF. The span at 442 to 454 shows a compositional bias: acidic residues; the sequence is FDDDDNDNDEDDN. The interval 492 to 650 is disordered; it reads LPAASVSQTH…DSGATQGQEA (159 aa). Over residues 513–530 the composition is skewed to polar residues; that stretch reads LPSSKNLKLVSETKTQKG. 2 consecutive short sequence motifs (LFa) follow at residues 531–542 and 566–577; these read LFSDEEDSEDLF and LFGDEDEEDSLF. Residues Ser533 and Ser538 each carry the phosphoserine modification. Low complexity predominate over residues 541–561; it reads LFSSQSSSKPKSASLPSSQPP. Polar residues-rich tracts occupy residues 584–594 and 601–611; these read KQTSSLQPQSQ and EQPSKKTSALL. Ser613 and Ser614 each carry phosphoserine. Positions 625-639 are enriched in basic and acidic residues; that stretch reads SHTKLASDNKSKGEL. 2 short sequence motifs (LFa) span residues 658-670 and 686-698; these read LFED…VDLF and LFED…SSLF. The segment at 691 to 837 is disordered; the sequence is AESGSSLFGL…SRPKSTGVFQ (147 aa). Ser723, Ser747, Ser752, Ser783, and Ser798 each carry phosphoserine. Over residues 800–811 the composition is skewed to acidic residues; sequence FDEDEDKVEDES. Over residues 818–830 the composition is skewed to basic and acidic residues; it reads DGREKGLKTDSRP. Short sequence motifs (LFa) lie at residues 835-843 and 852-858; these read VFQDEELLF and DPDVDLF. 2 disordered regions span residues 862-948 and 1014-1225; these read KKIR…PSSR and AQAD…SKTH. Phosphoserine occurs at positions 870 and 873. An LFa 10 motif is present at residues 874–884; it reads LFGDDEDDDLF. A compositionally biased stretch (basic and acidic residues) spans 894–906; it reads PEKKGTLKKDHPV. Polar residues predominate over residues 908 to 919; the sequence is LKNQDPLDSTQG. The segment at 932 to 1334 is interaction with phospholipids; the sequence is QDSSGLTPFK…DDPLNAFGSQ (403 aa). A compositionally biased stretch (basic residues) spans 1023 to 1041; that stretch reads NKSRVKVRGKRRPQTRAAR. The segment at 1024-1042 is required for interaction with F-actin-capping protein subunit alpha (CAPZA1 or CAPZA2 or CAPZA3); sequence KSRVKVRGKRRPQTRAARR. Phosphoserine occurs at positions 1049, 1067, 1084, and 1109. 3 consecutive short sequence motifs (LFa) follow at residues 1124-1131, 1164-1178, and 1194-1202; these read LFDSGDIF, AFPD…EDLF, and LLEDEEDLF. A phosphoserine mark is found at Ser1169, Ser1172, and Ser1173. Over residues 1203-1225 the composition is skewed to basic and acidic residues; it reads ADPRGKKNERKPDSHQDSVSKTH. 3 consecutive short sequence motifs (LFa) follow at residues 1227–1233, 1255–1263, and 1283–1292; these read IFEDDIF, LFDDNIDIF, and MFDDDTDDIF. The tract at residues 1294–1334 is disordered; the sequence is SGLQAKASKPKSQSAEAASEQRSEHKVASIFDDPLNAFGSQ. Positions 1297–1311 are enriched in low complexity; sequence QAKASKPKSQSAEAA. Residues 1323 to 1331 carry the LFa 17 motif; it reads IFDDPLNAF. Ser1333 carries the post-translational modification Phosphoserine.

The protein belongs to the FAM21 family. Component of the WASH core complex also described as WASH regulatory complex (SHRC) composed of WASHC1, WASHC2, WASHC3, WASHC4 and WASHC5; in the complex interacts (via N-terminus) directly with WASHC1. The WASH core complex associates with the F-actin-capping protein dimer (formed by CAPZA1, CAPZA2 or CAPZA3 and CAPZB) in a transient or substoichiometric manner which was initially described as WASH complex. Interacts with VPS35; mediates the association with the retromer CSC complex. Interacts with FKBP15. Interacts with CCDC93, CCDC22, VPS35L; indicative for an association of the WASH core complex with the CCC and retriever complexes. Directly interacts with TBC1D23.

It is found in the early endosome membrane. The protein localises to the cell membrane. Acts as a component of the WASH core complex that functions as a nucleation-promoting factor (NPF) at the surface of endosomes, where it recruits and activates the Arp2/3 complex to induce actin polymerization, playing a key role in the fission of tubules that serve as transport intermediates during endosome sorting. Mediates the recruitment of the WASH core complex to endosome membranes via binding to phospholipids and VPS35 of the retromer CSC. Mediates the recruitment of the F-actin-capping protein dimer to the WASH core complex probably promoting localized F-actin polymerization needed for vesicle scission. Via its C-terminus binds various phospholipids, most strongly phosphatidylinositol 4-phosphate (PtdIns-(4)P), phosphatidylinositol 5-phosphate (PtdIns-(5)P) and phosphatidylinositol 3,5-bisphosphate (PtdIns-(3,5)P2). Involved in the endosome-to-plasma membrane trafficking and recycling of SNX27-retromer-dependent cargo proteins, such as GLUT1. Required for the association of DNAJC13, ENTR1, ANKRD50 with retromer CSC subunit VPS35. Required for the endosomal recruitment of CCC and retriever complexes subunits COMMD1 and CCDC93 as well as the retrievere complex subunit VPS35L. In Mus musculus (Mouse), this protein is WASH complex subunit 2.